A 486-amino-acid polypeptide reads, in one-letter code: ATP synthase subunit beta (486 aa).

164 to 171 (GGAGVGKT) is an ATP binding site.

This sequence belongs to the ATPase alpha/beta chains family. As to quaternary structure, F-type ATPases have 2 components, CF(1) - the catalytic core - and CF(0) - the membrane proton channel. CF(1) has five subunits: alpha(3), beta(3), gamma(1), delta(1), epsilon(1). CF(0) has four main subunits: a(1), b(1), b'(1) and c(9-12).

It is found in the cellular thylakoid membrane. It carries out the reaction ATP + H2O + 4 H(+)(in) = ADP + phosphate + 5 H(+)(out). Produces ATP from ADP in the presence of a proton gradient across the membrane. The catalytic sites are hosted primarily by the beta subunits. This is ATP synthase subunit beta from Prochlorococcus marinus (strain MIT 9215).